Here is a 544-residue protein sequence, read N- to C-terminus: uncharacterized protein (544 aa).

The next 12 helical transmembrane spans lie at 41–61 (FSAWTSFCVSFSVLGLLPSFA), 71–91 (AGTPAMVWGWLIAMVFVQCVA), 106–126 (GLYYAAAVLAPKGWGPFAAWL), 166–186 (YQIFLLAVAAMIAQGFISSMP), 196–216 (WGTVLNMLFLAIVMITVLAVA), 240–260 (WSNGMAMLMSFAGVIWTMSGY), 280–300 (AIVMTSAFGGIVGWLLNLCIA), 332–352 (VALTSLTVICSFMMGQGCMVA), 391–411 (VVGILCCLLIFAGEAAINAIF), 413–433 (VGAIAAFVAFTTPIFLRVFFV), 451–471 (INGYAACAFVLLMVPILCFPQ), and 484–504 (WTCVVFGGPMLMVLIWWFVSA).

It belongs to the amino acid-polyamine-organocation (APC) superfamily.

It localises to the membrane. This is an uncharacterized protein from Schizosaccharomyces pombe (strain 972 / ATCC 24843) (Fission yeast).